Consider the following 453-residue polypeptide: Allantoinase (453 aa).

Positions 59, 61, 146, 186, 242, and 315 each coordinate Zn(2+). N6-carboxylysine is present on Lys146.

Belongs to the metallo-dependent hydrolases superfamily. Allantoinase family. As to quaternary structure, homotetramer. Zn(2+) is required as a cofactor. In terms of processing, carboxylation allows a single lysine to coordinate two zinc ions.

The enzyme catalyses (S)-allantoin + H2O = allantoate + H(+). Its pathway is nitrogen metabolism; (S)-allantoin degradation; allantoate from (S)-allantoin: step 1/1. Its function is as follows. Catalyzes the conversion of allantoin (5-ureidohydantoin) to allantoic acid by hydrolytic cleavage of the five-member hydantoin ring. This Salmonella agona (strain SL483) protein is Allantoinase.